The sequence spans 428 residues: Trigger factor (428 aa).

The PPIase FKBP-type domain occupies 163 to 248; the sequence is GDMVVIDYKG…VHEIKEKELP (86 aa).

The protein belongs to the FKBP-type PPIase family. Tig subfamily.

The protein resides in the cytoplasm. It carries out the reaction [protein]-peptidylproline (omega=180) = [protein]-peptidylproline (omega=0). Functionally, involved in protein export. Acts as a chaperone by maintaining the newly synthesized protein in an open conformation. Functions as a peptidyl-prolyl cis-trans isomerase. The sequence is that of Trigger factor from Alkaliphilus metalliredigens (strain QYMF).